The primary structure comprises 70 residues: Putative membrane protein insertion efficiency factor (70 aa).

This sequence belongs to the UPF0161 family.

It localises to the cell membrane. In terms of biological role, could be involved in insertion of integral membrane proteins into the membrane. The protein is Putative membrane protein insertion efficiency factor of Lachnoclostridium phytofermentans (strain ATCC 700394 / DSM 18823 / ISDg) (Clostridium phytofermentans).